Reading from the N-terminus, the 115-residue chain is Putative gamma-glutamylcyclotransferase VC_2546 (115 aa).

8 to 11 (YGTL) provides a ligand contact to substrate. E73 acts as the Proton acceptor in catalysis.

It belongs to the gamma-glutamylcyclotransferase family.

Its function is as follows. Putative gamma-glutamylcyclotransferase. The sequence is that of Putative gamma-glutamylcyclotransferase VC_2546 from Vibrio cholerae serotype O1 (strain ATCC 39315 / El Tor Inaba N16961).